The sequence spans 1438 residues: DNA-directed RNA polymerase subunit beta' (1438 aa).

Positions 72, 74, 87, and 90 each coordinate Zn(2+). Mg(2+)-binding residues include Asp-483, Asp-485, and Asp-487. Cys-831, Cys-905, Cys-912, and Cys-915 together coordinate Zn(2+).

It belongs to the RNA polymerase beta' chain family. In terms of assembly, the RNAP catalytic core consists of 2 alpha, 1 beta, 1 beta' and 1 omega subunit. When a sigma factor is associated with the core the holoenzyme is formed, which can initiate transcription. The cofactor is Mg(2+). Zn(2+) serves as cofactor.

The enzyme catalyses RNA(n) + a ribonucleoside 5'-triphosphate = RNA(n+1) + diphosphate. Functionally, DNA-dependent RNA polymerase catalyzes the transcription of DNA into RNA using the four ribonucleoside triphosphates as substrates. This is DNA-directed RNA polymerase subunit beta' from Flavobacterium psychrophilum (strain ATCC 49511 / DSM 21280 / CIP 103535 / JIP02/86).